Reading from the N-terminus, the 558-residue chain is MEDTRSVASLMDSTSSKIQQLQKAFAELESQRAVTLNLKWKELEEHFHGLERSLKRRFHELEDQEKEYETKTRKAQELLEKKKAAVEAKEKAALERLQKKRDAAMFTINSALDKYNNAPVSKPSVGERWPQNAVEDSSNVFAADSITDDNPDGIVQDVQISPVMGNYEVKAYPQLLKLCGDMDSTGLHKFVSDNRKNLASLKEEIPMAFRAAANPASLVLDSLEGFYPMEAPTADGKKDANLLGMRRTCIMLMECLSILLSGLDRNCLAVVLSQNVKHRAKTIAEGWNPLLESLDMDACNGNSLEAHAFLQLLATFAIVADFKEDELLKLIPMVSRRRQAAELCRSLGLAEKMPGVIEVLVNSGKQIDAVNLAFAFELTEQFSPVSLLKSYLIEARRSSPQGRPGNASPAVQDEFNERELIGLKTVIKCIEEHSLEEQYPVEPLHKRILQLEKAKADKKRATEPMKPQPKRPRGAQPRVTDNNNNINNNKTGYGRVIPERYPQYVYDNRPFLSGPIMAAQPPPPPPPQTYTFNPAPAHGNFYANCYQYQAPPPPPYFH.

Residues 9–102 (SLMDSTSSKI…ALERLQKKRD (94 aa)) adopt a coiled-coil conformation. A compositionally biased stretch (basic and acidic residues) spans 454-463 (AKADKKRATE). Residues 454–494 (AKADKKRATEPMKPQPKRPRGAQPRVTDNNNNINNNKTGYG) form a disordered region.

Belongs to the Frigida family.

This chain is FRIGIDA-like protein 3 (FRL3), found in Arabidopsis thaliana (Mouse-ear cress).